An 87-amino-acid polypeptide reads, in one-letter code: U14-lycotoxin-Ls1a (87 aa).

Positions 1–20 are cleaved as a signal peptide; it reads MNSKVFAALLLLALSTCVLS. A WAP domain is found at 21 to 66; sequence EKYCPTPRNTSCKKMNIRNNCCRDSDCTSNAFCCAEPCGNFCHKAS. 5 disulfides stabilise this stretch: Cys-24-Cys-54, Cys-32-Cys-58, Cys-41-Cys-53, Cys-42-Cys-80, and Cys-47-Cys-62.

Belongs to the venom protein 11 family. 01 (wap-1) subfamily. Contains 5 disulfide bonds. Expressed by the venom gland.

It is found in the secreted. In terms of biological role, has antibacterial activity. In Lycosa singoriensis (Wolf spider), this protein is U14-lycotoxin-Ls1a.